Reading from the N-terminus, the 276-residue chain is UPF0328 protein ECU03_0010 (276 aa).

2 disordered regions span residues 1–132 and 156–176; these read MAAP…PIIS and SFCQ…NMVH. Basic and acidic residues predominate over residues 106-126; the sequence is HTEGCHTHEANPEPNTKHTET.

The protein belongs to the UPF0328 family.

The sequence is that of UPF0328 protein ECU03_0010 from Encephalitozoon cuniculi (strain GB-M1) (Microsporidian parasite).